The primary structure comprises 669 residues: Protein BNIP5 (669 aa).

Disordered stretches follow at residues methionine 1 to glutamine 116, isoleucine 131 to valine 259, glutamine 273 to glutamate 401, and leucine 413 to arginine 544. Residues arginine 34–glutamate 47 are compositionally biased toward basic and acidic residues. Over residues serine 48–proline 73 the composition is skewed to polar residues. Basic and acidic residues-rich tracts occupy residues glutamate 104–arginine 113 and isoleucine 131–leucine 148. Residues arginine 158–lysine 175 are compositionally biased toward basic residues. The span at glutamate 285–leucine 295 shows a compositional bias: pro residues. Residue lysine 314 forms a Glycyl lysine isopeptide (Lys-Gly) (interchain with G-Cter in SUMO2) linkage. A compositionally biased stretch (polar residues) spans valine 346 to leucine 357. Positions proline 390–glutamate 401 are enriched in basic and acidic residues. Positions serine 445–serine 462 are enriched in basic residues. Over residues alanine 516–proline 528 the composition is skewed to low complexity.

The sequence is that of Protein BNIP5 (Bnip5) from Mus musculus (Mouse).